The following is a 252-amino-acid chain: Chitooligosaccharide deacetylase (252 aa).

Mg(2+)-binding residues include His61 and His125.

Belongs to the YdjC deacetylase family. ChbG subfamily. In terms of assembly, homodimer. Requires Mg(2+) as cofactor.

It is found in the cytoplasm. It catalyses the reaction N,N'-diacetylchitobiose + H2O = N-acetyl-beta-D-glucosaminyl-(1-&gt;4)-D-glucosamine + acetate. The catalysed reaction is diacetylchitobiose-6'-phosphate + H2O = N'-monoacetylchitobiose-6'-phosphate + acetate. Its pathway is glycan degradation; chitin degradation. Involved in the degradation of chitin. ChbG is essential for growth on the acetylated chitooligosaccharides chitobiose and chitotriose but is dispensable for growth on cellobiose and chitosan dimer, the deacetylated form of chitobiose. Deacetylation of chitobiose-6-P and chitotriose-6-P is necessary for both the activation of the chb promoter by the regulatory protein ChbR and the hydrolysis of phosphorylated beta-glucosides by the phospho-beta-glucosidase ChbF. Catalyzes the removal of only one acetyl group from chitobiose-6-P to yield monoacetylchitobiose-6-P, the inducer of ChbR and the substrate of ChbF. The polypeptide is Chitooligosaccharide deacetylase (Salmonella schwarzengrund (strain CVM19633)).